We begin with the raw amino-acid sequence, 239 residues long: Fatty acid metabolism regulator protein (239 aa).

Residues 6-74 enclose the HTH gntR-type domain; sequence QSPAGFAEEY…HGKPTKVNNF (69 aa). Positions 34–53 form a DNA-binding region, H-T-H motif; that stretch reads ERELSELIGVTRTTLREVLQ.

Homodimer.

Its subcellular location is the cytoplasm. Multifunctional regulator of fatty acid metabolism. Represses transcription of at least eight genes required for fatty acid transport and beta-oxidation including fadA, fadB, fadD, fadL and fadE. Activates transcription of at least three genes required for unsaturated fatty acid biosynthesis: fabA, fabB and iclR, the gene encoding the transcriptional regulator of the aceBAK operon encoding the glyoxylate shunt enzymes. Binding of FadR is specifically inhibited by long chain fatty acyl-CoA compounds. This Salmonella typhi protein is Fatty acid metabolism regulator protein.